The sequence spans 484 residues: Dolichyl-P-Man:Man5GlcNAc2-PP-dolichol alpha-1,3-mannosyltransferase l(2)not2 (484 aa).

Over 1–43 (MAPPKAASHRPAVRRKKSGTLVDSILDKYLNVRFFKYLLLEPA) the chain is Cytoplasmic. The helical transmembrane segment at 44-64 (ALPIVGLFVLLAELVINVVVI) threads the bilayer. Residues 65-97 (QRVPYTEIDWVAYMQECEGFLNGTTNYSLLRGD) are Lumenal-facing. Residues 98-118 (TGPLVYPAAFVYIYSALYYVT) traverse the membrane as a helical segment. Residues 119-125 (SHGTNVR) lie on the Cytoplasmic side of the membrane. The chain crosses the membrane as a helical span at residues 126–146 (LAQYIFAGIYLLQLALVLRLY). Topologically, residues 147–171 (SKSRKVPPYVLVLSAFTSYRIHSIY) are lumenal. Residues 172–192 (VLRLFNDPVAVLLLYAALNLF) form a helical membrane-spanning segment. Residues 193 to 211 (LDRRWTLGSTFFSLAVGVK) lie on the Cytoplasmic side of the membrane. The helical transmembrane segment at 212–232 (MNILLFAPALLLFYLANLGLL) threads the bilayer. Position 233 (Arg-233) is a topological domain, lumenal. A helical membrane pass occupies residues 234–254 (TILQLAVCGVIQLLLGAPFLL). Over 255–294 (THPVEYLRGSFDLGRIFEHKWTVNYRFLSRDVFENRTFHV) the chain is Cytoplasmic. Residues 295 to 315 (SLLGLHLLLLLAFAKPTWTFF) form a helical membrane-spanning segment. Over 316–403 (QSYVRLRRIE…YGIHFDRCTQ (88 aa)) the chain is Lumenal. A helical transmembrane segment spans residues 404-424 (LALLPFFLCNLVGVACSRSLH). The Cytoplasmic portion of the chain corresponds to 425–426 (YQ). Residues 427–447 (FYVWYFHSLPYLAWSTPYSLG) form a helical membrane-spanning segment. Residues 448-484 (VRCLILGLIEYCWNTYPSTNFSSAALHFTHIIPPYQL) lie on the Lumenal side of the membrane.

This sequence belongs to the glycosyltransferase ALG3 family.

Its subcellular location is the endoplasmic reticulum membrane. The enzyme catalyses an alpha-D-Man-(1-&gt;2)-alpha-D-Man-(1-&gt;2)-alpha-D-Man-(1-&gt;3)-[alpha-D-Man-(1-&gt;6)]-beta-D-Man-(1-&gt;4)-beta-D-GlcNAc-(1-&gt;4)-alpha-D-GlcNAc-diphospho-di-trans,poly-cis-dolichol + a di-trans,poly-cis-dolichyl beta-D-mannosyl phosphate = an alpha-D-Man-(1-&gt;2)-alpha-D-Man-(1-&gt;2)-alpha-D-Man-(1-&gt;3)-[alpha-D-Man-(1-&gt;3)-alpha-D-Man-(1-&gt;6)]-beta-D-Man-(1-&gt;4)-beta-D-GlcNAc-(1-&gt;4)-alpha-D-GlcNAc-diphospho-di-trans,poly-cis-dolichol + a di-trans,poly-cis-dolichyl phosphate + H(+). Its pathway is protein modification; protein glycosylation. Probable alpha-1,3-mannosyltransferase involved in the N-glycosylation pathway. Involved in glycosylation of the TNF receptor grnd, regulating its ligand affinity. Required for normal epithelial growth and architecture. Suppressor of JNK-dependent intestinal stem cell proliferation. This chain is Dolichyl-P-Man:Man5GlcNAc2-PP-dolichol alpha-1,3-mannosyltransferase l(2)not2, found in Drosophila melanogaster (Fruit fly).